The following is a 216-amino-acid chain: NKG2-D type II integral membrane protein (216 aa).

Topologically, residues 1 to 51 (MGWIRGRRSRHSWEMSEFHNYNLDLKKSDFSTRWQKQRCPVVKSKCRENAS) are cytoplasmic. Residues 52–72 (PFFFCCFIAVAMGIRFIIMVT) traverse the membrane as a helical; Signal-anchor for type II membrane protein segment. At 73 to 216 (IWSAVFLNSL…NTYICMQRTV (144 aa)) the chain is on the extracellular side. 2 disulfides stabilise this stretch: Cys-96-Cys-105 and Cys-99-Cys-110. A C-type lectin domain is found at 98-213 (PCPKNWICYK…STPNTYICMQ (116 aa)). Asn-115, Asn-131, Asn-163, and Asn-202 each carry an N-linked (GlcNAc...) asparagine glycan. 2 disulfides stabilise this stretch: Cys-127–Cys-211 and Cys-189–Cys-203.

Homodimer; disulfide-linked. Heterohexamer composed of two subunits of KLRK1 and four subunits of HCST/DAP10. Interacts (via transmembrane domain) with HCST/DAP10 (via transmembrane domain); the interaction is required for KLRK1 NK cell surface and induces NK cell-mediated cytotoxicity. Can form disulfide-bonded heterodimer with CD94. Interacts with CEACAM1; recruits PTPN6 that dephosphorylates VAV1. In terms of tissue distribution, natural killer cells.

The protein localises to the cell membrane. Its function is as follows. Functions as an activating and costimulatory receptor involved in immunosurveillance upon binding to various cellular stress-inducible ligands displayed at the surface of autologous tumor cells and virus-infected cells. Provides both stimulatory and costimulatory innate immune responses on activated killer (NK) cells, leading to cytotoxic activity. Acts as a costimulatory receptor for T-cell receptor (TCR) in CD8(+) T-cell-mediated adaptive immune responses by amplifying T-cell activation. Stimulates perforin-mediated elimination of ligand-expressing tumor cells. Signaling involves calcium influx, culminating in the expression of TNF-alpha. Participates in NK cell-mediated bone marrow graft rejection. May play a regulatory role in differentiation and survival of NK cells. Binds to ligands belonging to various subfamilies of MHC class I-related glycoproteins. The polypeptide is NKG2-D type II integral membrane protein (KLRK1) (Pan troglodytes (Chimpanzee)).